The following is a 1317-amino-acid chain: Toxin protein Tse5 (1317 aa).

The segment at 395 to 419 is disordered; sequence GRETRRRRDGQGRMLEEESPGKARY. The segment covering 403-415 has biased composition (basic and acidic residues); it reads DGQGRMLEEESPG.

Its function is as follows. Toxin secreted by the H1 type VI (H1-T6SS) secretion system that acts on bacterial target cells. The producing bacterium is protected by a cognate immunity protein. The chain is Toxin protein Tse5 from Pseudomonas aeruginosa (strain ATCC 15692 / DSM 22644 / CIP 104116 / JCM 14847 / LMG 12228 / 1C / PRS 101 / PAO1).